Consider the following 189-residue polypeptide: Proline-rich protein 29 (189 aa).

The interval 152–189 is disordered; that stretch reads SREREVRAVPPPPPPSATGTVGADVPPASDYYDAESLL.

In Homo sapiens (Human), this protein is Proline-rich protein 29 (PRR29).